A 688-amino-acid chain; its full sequence is Phosphoinositide 3-phosphatase (688 aa).

The region spanning 155 to 637 (SWDIYDPIKE…KKVQWWWQLY (483 aa)) is the Myotubularin phosphatase domain. The active-site Phosphocysteine intermediate is the C397. The segment covering 647-668 (ELRHKRDSVPISVDKKSKEHSN) has biased composition (basic and acidic residues). A disordered region spans residues 647–672 (ELRHKRDSVPISVDKKSKEHSNSDGG).

The protein belongs to the protein-tyrosine phosphatase family. Non-receptor class myotubularin subfamily.

The protein localises to the cytoplasm. The enzyme catalyses a 1,2-diacyl-sn-glycero-3-phospho-(1D-myo-inositol-3-phosphate) + H2O = a 1,2-diacyl-sn-glycero-3-phospho-(1D-myo-inositol) + phosphate. In terms of biological role, lipid phosphatase which dephosphorylates phosphatidylinositol 3-monophosphate (PI3P). Involved in the control of PI3P-dependent signaling and in the maintenance of endosomal system integrity. The chain is Phosphoinositide 3-phosphatase from Saccharomyces cerevisiae (strain ATCC 204508 / S288c) (Baker's yeast).